We begin with the raw amino-acid sequence, 156 residues long: Small ribosomal subunit protein uS7 (156 aa).

It belongs to the universal ribosomal protein uS7 family. Part of the 30S ribosomal subunit. Contacts proteins S9 and S11.

Functionally, one of the primary rRNA binding proteins, it binds directly to 16S rRNA where it nucleates assembly of the head domain of the 30S subunit. Is located at the subunit interface close to the decoding center, probably blocks exit of the E-site tRNA. The protein is Small ribosomal subunit protein uS7 of Thiobacillus denitrificans (strain ATCC 25259 / T1).